Consider the following 264-residue polypeptide: uncharacterized protein (264 aa).

The first 22 residues, 1-22 (MGYLKKLALFISVIILGIFIIG), serve as a signal peptide directing secretion. Cys23 carries the N-palmitoyl cysteine lipid modification. Cys23 carries the S-diacylglycerol cysteine lipid modification.

This sequence belongs to the staphylococcal tandem lipoprotein family.

Its subcellular location is the cell membrane. This is an uncharacterized protein from Staphylococcus aureus (strain N315).